Here is a 144-residue protein sequence, read N- to C-terminus: Nucleoside diphosphate kinase (144 aa).

ATP contacts are provided by Lys-11, Phe-59, Arg-87, Thr-93, Arg-104, and Asn-114. His-117 (pros-phosphohistidine intermediate) is an active-site residue.

This sequence belongs to the NDK family. Homotetramer. Requires Mg(2+) as cofactor.

It localises to the cytoplasm. The enzyme catalyses a 2'-deoxyribonucleoside 5'-diphosphate + ATP = a 2'-deoxyribonucleoside 5'-triphosphate + ADP. It catalyses the reaction a ribonucleoside 5'-diphosphate + ATP = a ribonucleoside 5'-triphosphate + ADP. Its function is as follows. Major role in the synthesis of nucleoside triphosphates other than ATP. The ATP gamma phosphate is transferred to the NDP beta phosphate via a ping-pong mechanism, using a phosphorylated active-site intermediate. The sequence is that of Nucleoside diphosphate kinase from Baumannia cicadellinicola subsp. Homalodisca coagulata.